Here is a 747-residue protein sequence, read N- to C-terminus: Endoglucanase C (747 aa).

A signal peptide spans 1–37 (MGHVTSPSKRYPASFKRAGSILGVSIALAAFSNVAAA). One can recognise a CBM2 domain in the interval 38-136 (GCEYVVTNSW…TVNGAACTGG (99 aa)). Disulfide bonds link Cys-39–Cys-133, Cys-183–Cys-214, and Cys-193–Cys-208. In terms of domain architecture, CBM10 spans 182–211 (QCNWYGTLYPLCVSTTSGWGYENNRSCISP). The tract at residues 226-283 (GSSSPSSISSSSVRSSSSSSVVPPSSSSSSSVPSSSSSSVSSSSVVSSSSSSVSVPGT) is disordered. Over residues 227 to 281 (SSSPSSISSSSVRSSSSSSVVPPSSSSSSSVPSSSSSSVSSSSVVSSSSSSVSVP) the composition is skewed to low complexity. The catalytic stretch occupies residues 280-747 (VPGTGVFRVN…TQLLHNMWGL (468 aa)). Catalysis depends on Glu-502, which acts as the Proton donor. The active-site Nucleophile is Glu-652.

This sequence belongs to the glycosyl hydrolase 5 (cellulase A) family.

It carries out the reaction Endohydrolysis of (1-&gt;4)-beta-D-glucosidic linkages in cellulose, lichenin and cereal beta-D-glucans.. The protein is Endoglucanase C (celC) of Cellvibrio japonicus (strain Ueda107) (Pseudomonas fluorescens subsp. cellulosa).